We begin with the raw amino-acid sequence, 336 residues long: Pyridoxal 5'-phosphate synthase subunit PdxS (336 aa).

Asp-64 provides a ligand contact to D-ribose 5-phosphate. The active-site Schiff-base intermediate with D-ribose 5-phosphate is Lys-121. Gly-193 serves as a coordination point for D-ribose 5-phosphate. Lys-205 is a binding site for D-glyceraldehyde 3-phosphate. D-ribose 5-phosphate contacts are provided by residues Gly-254 and 275–276 (GS).

Belongs to the PdxS/SNZ family. In terms of assembly, in the presence of PdxT, forms a dodecamer of heterodimers.

It catalyses the reaction aldehydo-D-ribose 5-phosphate + D-glyceraldehyde 3-phosphate + L-glutamine = pyridoxal 5'-phosphate + L-glutamate + phosphate + 3 H2O + H(+). Its pathway is cofactor biosynthesis; pyridoxal 5'-phosphate biosynthesis. Functionally, catalyzes the formation of pyridoxal 5'-phosphate from ribose 5-phosphate (RBP), glyceraldehyde 3-phosphate (G3P) and ammonia. The ammonia is provided by the PdxT subunit. Can also use ribulose 5-phosphate and dihydroxyacetone phosphate as substrates, resulting from enzyme-catalyzed isomerization of RBP and G3P, respectively. This Pyrobaculum aerophilum (strain ATCC 51768 / DSM 7523 / JCM 9630 / CIP 104966 / NBRC 100827 / IM2) protein is Pyridoxal 5'-phosphate synthase subunit PdxS.